A 1682-amino-acid chain; its full sequence is 1-phosphatidylinositol 4,5-bisphosphate phosphodiesterase eta-1 (1682 aa).

One can recognise a PH domain in the interval 20-128 (SVMQSGTQMI…WITGLKYLMA (109 aa)). EF-hand domains follow at residues 142–177 (THDQWVKQTFEEADKNGDGLLNIEEIHQLMHKLNVN), 178–214 (LPRRKVRQMFQEADTDENQGTLTFEEFCVFYKMMSLR), and 226–246 (DKKDHLTVEELAQFLKVEQKM). Ca(2+)-binding residues include aspartate 155, asparagine 157, aspartate 159, and glutamate 166. One can recognise a PI-PLC X-box domain in the interval 299-444 (QDMDQPLCNY…LKGKILVKGK (146 aa)). Histidine 314 is a catalytic residue. Ca(2+)-binding residues include asparagine 315, glutamate 344, and aspartate 346. Histidine 358 is a catalytic residue. Glutamate 393 contacts Ca(2+). Substrate contacts are provided by lysine 442 and lysine 444. The tract at residues 534 to 588 (LDVKESGKKSHGRSLMANFGKHKQKATKSRSKSYSTDDEDDSLQNPGKEGGQLYR) is disordered. The span at 553–564 (GKHKQKATKSRS) shows a compositional bias: basic residues. The PI-PLC Y-box domain maps to 602 to 715 (LSDLVVYTNS…GYILKPQQMC (114 aa)). Serine 628 and arginine 655 together coordinate substrate. A C2 domain is found at 716–844 (KGTFNPFSGD…PGYRHVYLEG (129 aa)). Residues isoleucine 759, aspartate 761, aspartate 785, aspartate 814, histidine 815, and aspartate 816 each contribute to the Ca(2+) site. Positions 992-1018 (DTDGKENCLAGDKDDRRKGAATRKDPH) are enriched in basic and acidic residues. Disordered stretches follow at residues 992 to 1083 (DTDG…LSPR), 1296 to 1321 (NLPGFPDASPGQFPKSPTHGEDHSQV), and 1581 to 1603 (RAKEKQEAGKQKAMAQSTRGGVV). Residues 1019–1033 (FSNFNKKLSSSSSAL) are compositionally biased toward low complexity. 2 stretches are compositionally biased toward polar residues: residues 1040–1050 (QGPTASVSNPE) and 1065–1074 (NMTNDCQENH). The span at 1581–1590 (RAKEKQEAGK) shows a compositional bias: basic and acidic residues.

The cofactor is Ca(2+). As to expression, expressed in brain and to a lower extent in lung. In brain, it is found in cerebrum, cerebellum and spinal cord.

The protein localises to the cytoplasm. The protein resides in the membrane. It carries out the reaction a 1,2-diacyl-sn-glycero-3-phospho-(1D-myo-inositol-4,5-bisphosphate) + H2O = 1D-myo-inositol 1,4,5-trisphosphate + a 1,2-diacyl-sn-glycerol + H(+). The production of the second messenger molecules diacylglycerol (DAG) and inositol 1,4,5-trisphosphate (IP3) is mediated by calcium-activated phosphatidylinositol-specific phospholipase C enzymes. This chain is 1-phosphatidylinositol 4,5-bisphosphate phosphodiesterase eta-1, found in Mus musculus (Mouse).